Reading from the N-terminus, the 257-residue chain is Imidazole glycerol phosphate synthase subunit HisF (257 aa).

Active-site residues include Asp-12 and Asp-131.

It belongs to the HisA/HisF family. Heterodimer of HisH and HisF.

It localises to the cytoplasm. It catalyses the reaction 5-[(5-phospho-1-deoxy-D-ribulos-1-ylimino)methylamino]-1-(5-phospho-beta-D-ribosyl)imidazole-4-carboxamide + L-glutamine = D-erythro-1-(imidazol-4-yl)glycerol 3-phosphate + 5-amino-1-(5-phospho-beta-D-ribosyl)imidazole-4-carboxamide + L-glutamate + H(+). The protein operates within amino-acid biosynthesis; L-histidine biosynthesis; L-histidine from 5-phospho-alpha-D-ribose 1-diphosphate: step 5/9. IGPS catalyzes the conversion of PRFAR and glutamine to IGP, AICAR and glutamate. The HisF subunit catalyzes the cyclization activity that produces IGP and AICAR from PRFAR using the ammonia provided by the HisH subunit. The chain is Imidazole glycerol phosphate synthase subunit HisF from Nocardia farcinica (strain IFM 10152).